The chain runs to 635 residues: 5-aminolevulinate synthase, non-specific, mitochondrial (635 aa).

The N-terminal 56 residues, 1–56 (MEAVVRRCPFLARVSQAFLQKAGPSLLFYAQHCPKMMEAAPPAAARGLATSASRGQ), are a transit peptide targeting the mitochondrion. Residues 44–66 (AARGLATSASRGQQVEETPAAQP) are compositionally biased toward low complexity. The tract at residues 44 to 94 (AARGLATSASRGQQVEETPAAQPEAKKAKEVAQQNTDGSQPPAGHPPAAAV) is disordered. The substrate site is built by R212, S329, and K348. 3 residues coordinate pyridoxal 5'-phosphate: S381, H409, and T437. K440 is an active-site residue. K440 is modified (N6-(pyridoxal phosphate)lysine). Positions 469 and 470 each coordinate pyridoxal 5'-phosphate. T557 provides a ligand contact to substrate.

It belongs to the class-II pyridoxal-phosphate-dependent aminotransferase family. Homodimer. It depends on pyridoxal 5'-phosphate as a cofactor. In terms of tissue distribution, ubiquitous.

Its subcellular location is the mitochondrion inner membrane. The catalysed reaction is succinyl-CoA + glycine + H(+) = 5-aminolevulinate + CO2 + CoA. It functions in the pathway porphyrin-containing compound metabolism; protoporphyrin-IX biosynthesis; 5-aminolevulinate from glycine: step 1/1. Catalyzes the pyridoxal 5'-phosphate (PLP)-dependent condensation of succinyl-CoA and glycine to form aminolevulinic acid (ALA), with CoA and CO2 as by-products. In Gallus gallus (Chicken), this protein is 5-aminolevulinate synthase, non-specific, mitochondrial (ALAS1).